We begin with the raw amino-acid sequence, 188 residues long: Hemophore HasA (188 aa).

2 residues coordinate heme: H32 and Y75.

Monomer.

Its subcellular location is the secreted. Can bind free heme and also acquire it from hemoglobin. Conveys heme from hemoglobin to the HasR receptor which releases it into the bacterium. HasR alone can take up heme but the synergy between HasA and HasR increases heme uptake 100-fold. The chain is Hemophore HasA (hasA) from Serratia marcescens.